A 596-amino-acid polypeptide reads, in one-letter code: Putative terpenoid synthase 5 (596 aa).

4 residues coordinate Mg(2+): aspartate 349, aspartate 353, asparagine 481, and aspartate 489. The short motif at 349-353 (DDTCD) is the DDXXD motif element.

It belongs to the terpene synthase family. Tpsa subfamily. Mg(2+) serves as cofactor. Requires Mn(2+) as cofactor.

The protein resides in the cytoplasm. It participates in secondary metabolite biosynthesis; terpenoid biosynthesis. The polypeptide is Putative terpenoid synthase 5 (TPS05) (Arabidopsis thaliana (Mouse-ear cress)).